We begin with the raw amino-acid sequence, 179 residues long: Inner membrane-spanning protein YciB (179 aa).

Helical transmembrane passes span 22 to 42 (IYAATAALIVATAIVLIYSWV), 50 to 70 (MALITFVLVVVFGGLTLFFHN), 76 to 96 (WKVTVIYALFAGALLVSQWVM), 121 to 141 (LAWAVFFILCGLANIYIAFWL), and 149 to 169 (FKVFGLTALTLIFTLLSGVYI).

Belongs to the YciB family.

It localises to the cell inner membrane. Functionally, plays a role in cell envelope biogenesis, maintenance of cell envelope integrity and membrane homeostasis. The sequence is that of Inner membrane-spanning protein YciB from Escherichia fergusonii (strain ATCC 35469 / DSM 13698 / CCUG 18766 / IAM 14443 / JCM 21226 / LMG 7866 / NBRC 102419 / NCTC 12128 / CDC 0568-73).